A 541-amino-acid chain; its full sequence is Glucose-6-phosphate isomerase (541 aa).

Glutamate 346 serves as the catalytic Proton donor. Catalysis depends on residues histidine 377 and lysine 506.

The protein belongs to the GPI family.

Its subcellular location is the cytoplasm. It carries out the reaction alpha-D-glucose 6-phosphate = beta-D-fructose 6-phosphate. It participates in carbohydrate biosynthesis; gluconeogenesis. It functions in the pathway carbohydrate degradation; glycolysis; D-glyceraldehyde 3-phosphate and glycerone phosphate from D-glucose: step 2/4. Its function is as follows. Catalyzes the reversible isomerization of glucose-6-phosphate to fructose-6-phosphate. The protein is Glucose-6-phosphate isomerase of Rhizobium johnstonii (strain DSM 114642 / LMG 32736 / 3841) (Rhizobium leguminosarum bv. viciae).